The sequence spans 195 residues: dITP/XTP pyrophosphatase (195 aa).

8–13 (TNNQGK) is a substrate binding site. Glutamate 39 and aspartate 68 together coordinate Mg(2+). Residue aspartate 68 is the Proton acceptor of the active site. Substrate-binding positions include serine 69, 149-152 (FGYD), lysine 172, and 177-178 (HR).

This sequence belongs to the HAM1 NTPase family. As to quaternary structure, homodimer. Requires Mg(2+) as cofactor.

It catalyses the reaction XTP + H2O = XMP + diphosphate + H(+). The enzyme catalyses dITP + H2O = dIMP + diphosphate + H(+). The catalysed reaction is ITP + H2O = IMP + diphosphate + H(+). In terms of biological role, pyrophosphatase that catalyzes the hydrolysis of nucleoside triphosphates to their monophosphate derivatives, with a high preference for the non-canonical purine nucleotides XTP (xanthosine triphosphate), dITP (deoxyinosine triphosphate) and ITP. Seems to function as a house-cleaning enzyme that removes non-canonical purine nucleotides from the nucleotide pool, thus preventing their incorporation into DNA/RNA and avoiding chromosomal lesions. This Staphylococcus epidermidis (strain ATCC 12228 / FDA PCI 1200) protein is dITP/XTP pyrophosphatase.